The following is a 165-amino-acid chain: Transcription antitermination protein NusB (165 aa).

The tract at residues 1–27 is disordered; the sequence is MISDDTDQFNPRDAKSPEIAKGKSAKR. Positions 10 to 21 are enriched in basic and acidic residues; sequence NPRDAKSPEIAK.

This sequence belongs to the NusB family.

Involved in transcription antitermination. Required for transcription of ribosomal RNA (rRNA) genes. Binds specifically to the boxA antiterminator sequence of the ribosomal RNA (rrn) operons. The protein is Transcription antitermination protein NusB of Pseudomonas syringae pv. tomato (strain ATCC BAA-871 / DC3000).